Here is a 155-residue protein sequence, read N- to C-terminus: Large ribosomal subunit protein eL24B (155 aa).

Serine 7 is subject to Phosphoserine. The interval 66 to 155 (EVAKKRSRKT…AFQKVAATSR (90 aa)) is disordered. Residues 89 to 129 (LIKERRSLKPEVRKANREEKLKANKEKKRAEKAARKAEKAK) are compositionally biased toward basic and acidic residues.

This sequence belongs to the eukaryotic ribosomal protein eL24 family. Component of the large ribosomal subunit (LSU). Mature yeast ribosomes consist of a small (40S) and a large (60S) subunit. The 40S small subunit contains 1 molecule of ribosomal RNA (18S rRNA) and 33 different proteins (encoded by 57 genes). The large 60S subunit contains 3 rRNA molecules (25S, 5.8S and 5S rRNA) and 46 different proteins (encoded by 81 genes).

The protein localises to the cytoplasm. Functionally, component of the ribosome, a large ribonucleoprotein complex responsible for the synthesis of proteins in the cell. The small ribosomal subunit (SSU) binds messenger RNAs (mRNAs) and translates the encoded message by selecting cognate aminoacyl-transfer RNA (tRNA) molecules. The large subunit (LSU) contains the ribosomal catalytic site termed the peptidyl transferase center (PTC), which catalyzes the formation of peptide bonds, thereby polymerizing the amino acids delivered by tRNAs into a polypeptide chain. The nascent polypeptides leave the ribosome through a tunnel in the LSU and interact with protein factors that function in enzymatic processing, targeting, and the membrane insertion of nascent chains at the exit of the ribosomal tunnel. The sequence is that of Large ribosomal subunit protein eL24B from Saccharomyces cerevisiae (strain ATCC 204508 / S288c) (Baker's yeast).